Here is a 364-residue protein sequence, read N- to C-terminus: Peptide chain release factor 1 (364 aa).

At Gln232 the chain carries N5-methylglutamine.

The protein belongs to the prokaryotic/mitochondrial release factor family. Methylated by PrmC. Methylation increases the termination efficiency of RF1.

It localises to the cytoplasm. Its function is as follows. Peptide chain release factor 1 directs the termination of translation in response to the peptide chain termination codons UAG and UAA. The polypeptide is Peptide chain release factor 1 (Sorangium cellulosum (strain So ce56) (Polyangium cellulosum (strain So ce56))).